The primary structure comprises 92 residues: Large ribosomal subunit protein eL43 (92 aa).

Residues 39-60 (CDFCGKYGMKRKAVGIWSCKGC) form a C4-type zinc finger.

It belongs to the eukaryotic ribosomal protein eL43 family.

In Ostreococcus lucimarinus (strain CCE9901), this protein is Large ribosomal subunit protein eL43 (RPL37a).